An 86-amino-acid chain; its full sequence is Kappa-theraphotoxin-Cg1a 4 (86 aa).

Residues 1–21 (MKASVLITLAVLGVMFVWASA) form the signal peptide. The propeptide occupies 22-50 (AELEERGSDQRDSPAWLKSMERIFQSEER). 3 disulfides stabilise this stretch: Cys52–Cys66, Cys59–Cys71, and Cys65–Cys78. The residue at position 84 (Phe84) is a Phenylalanine amide.

Belongs to the neurotoxin 10 (Hwtx-1) family. 28 (Jztx-11) subfamily. As to expression, expressed by the venom gland.

The protein localises to the secreted. In terms of biological role, this toxin acts as a voltage-dependent gating-modifier. It inhibits the sodium conductance (IC(50)=124 nM) and slows the fast inactivation (EC(50)=1180 nM) of Nav1.5/SCN5A. It significantly shifts the activation to more depolarized voltages and decreases the deactivation of Nav1.5 currents upon extreme depolarization, but only slightly affects voltage-dependence of steady-state inactivation. In addition, this toxin causes an approximately five-fold decrease in the rate of recovery from inactivation and an approximately 1.9-fold reduction in the closed-state inactivation rate. This toxin integrates the functions of site 3 toxins (alpha-scorpion toxins) with site 4 toxins (beta-scorpion and spider toxins) by targeting multiple sites on Nav1.5. Also shows inhibition of voltage-gated potassium channels (5 uM completely inhibits Kv2.1/KCNB1, whereas 5 uM moderately inhibits Kv4.2/KCND2 Kv4.1/KCND1 channels). The protein is Kappa-theraphotoxin-Cg1a 4 of Chilobrachys guangxiensis (Chinese earth tiger tarantula).